We begin with the raw amino-acid sequence, 235 residues long: Large ribosomal subunit protein uL1 (235 aa).

Belongs to the universal ribosomal protein uL1 family. Part of the 50S ribosomal subunit.

Binds directly to 23S rRNA. The L1 stalk is quite mobile in the ribosome, and is involved in E site tRNA release. Its function is as follows. Protein L1 is also a translational repressor protein, it controls the translation of the L11 operon by binding to its mRNA. The protein is Large ribosomal subunit protein uL1 of Methylobacterium nodulans (strain LMG 21967 / CNCM I-2342 / ORS 2060).